A 1058-amino-acid polypeptide reads, in one-letter code: Protein translocase subunit SECA2, chloroplastic (1058 aa).

A chloroplast-targeting transit peptide spans 1 to 58 (MGSVSNLVSPNICHPAPPCLTSRSNKFPWTKPISGLLFYRSVTPIKRCHLVRRSCVVS). Position 167 to 174 (167 to 174 (MKTGEGKT)) interacts with ATP.

This sequence belongs to the SecA family. Part of a second Sec protein translocation apparatus. Interacts probably with SCY2.

It is found in the plastid. The protein resides in the chloroplast membrane. It carries out the reaction ATP + H2O + chloroplast-proteinSide 1 = ADP + phosphate + chloroplast-proteinSide 2.. Functionally, involved in protein export. Probably interacts with other proteins to allow the postimport or conservative sorting pathway for inner membrane proteins in plastids. May have a central role in coupling the hydrolysis of ATP to the transfer of proteins across the membrane. This chain is Protein translocase subunit SECA2, chloroplastic, found in Arabidopsis thaliana (Mouse-ear cress).